Reading from the N-terminus, the 65-residue chain is Large ribosomal subunit protein uL29 (65 aa).

Belongs to the universal ribosomal protein uL29 family.

The polypeptide is Large ribosomal subunit protein uL29 (rpmC) (Borreliella burgdorferi (strain ATCC 35210 / DSM 4680 / CIP 102532 / B31) (Borrelia burgdorferi)).